Reading from the N-terminus, the 256-residue chain is Leucyl/phenylalanyl-tRNA--protein transferase (256 aa).

The interval 232–256 (DGCTGASRHGPGADMRRGDMSREST) is disordered. Basic and acidic residues predominate over residues 245–256 (DMRRGDMSREST).

Belongs to the L/F-transferase family.

It localises to the cytoplasm. The catalysed reaction is N-terminal L-lysyl-[protein] + L-leucyl-tRNA(Leu) = N-terminal L-leucyl-L-lysyl-[protein] + tRNA(Leu) + H(+). It catalyses the reaction N-terminal L-arginyl-[protein] + L-leucyl-tRNA(Leu) = N-terminal L-leucyl-L-arginyl-[protein] + tRNA(Leu) + H(+). It carries out the reaction L-phenylalanyl-tRNA(Phe) + an N-terminal L-alpha-aminoacyl-[protein] = an N-terminal L-phenylalanyl-L-alpha-aminoacyl-[protein] + tRNA(Phe). Its function is as follows. Functions in the N-end rule pathway of protein degradation where it conjugates Leu, Phe and, less efficiently, Met from aminoacyl-tRNAs to the N-termini of proteins containing an N-terminal arginine or lysine. The polypeptide is Leucyl/phenylalanyl-tRNA--protein transferase (Chromohalobacter salexigens (strain ATCC BAA-138 / DSM 3043 / CIP 106854 / NCIMB 13768 / 1H11)).